We begin with the raw amino-acid sequence, 439 residues long: MAMLNDTIYALSSGAPPSGVSVIRVSGTLTRDILFQLVGSVPAARTASYRTIRTRYDQPVDSGLVLFFPGPNSFTGEDAAELQIHGSKAVLAALFRELGDIPGVRMAMEGEFSRRAFENGKLDLVEVEGLADLIGAETEMQRRLAVEQSAGGVSAIYDSWAERLTRARALIEAELDFPDEDDVPGSVSDMVWADMARLRHDIALHLEAASAGEIIRDGFKVVIAGAPNAGKSSLMNALAKREVAIVTDIAGTTRDVLHVDLDIDGYLVKLYDTAGLREAEDRVEIEGVRRARVALRDADLVLLLVDMSNPIIPADLEQALPHVTVGTKKDLIETASDRYDLQISTTTGEGLPELRDLIGRVVKERYGGQSLAIPSRQRHKDSLAKCLAALDAAISQGSANLELRTEQLRLAAEYLGRITGRVDVEQLLDVIFSEFCIGK.

Positions 24, 81, and 121 each coordinate (6S)-5-formyl-5,6,7,8-tetrahydrofolate. Residues 218 to 363 (GFKVVIAGAP…LRDLIGRVVK (146 aa)) enclose the TrmE-type G domain. Position 228 (Asn228) interacts with K(+). Residues 228-233 (NAGKSS), 247-253 (TDIAGTT), and 272-275 (DTAG) each bind GTP. Position 232 (Ser232) interacts with Mg(2+). Positions 247, 249, and 252 each coordinate K(+). Position 253 (Thr253) interacts with Mg(2+). Lys439 is a (6S)-5-formyl-5,6,7,8-tetrahydrofolate binding site.

It belongs to the TRAFAC class TrmE-Era-EngA-EngB-Septin-like GTPase superfamily. TrmE GTPase family. As to quaternary structure, homodimer. Heterotetramer of two MnmE and two MnmG subunits. The cofactor is K(+).

It localises to the cytoplasm. Exhibits a very high intrinsic GTPase hydrolysis rate. Involved in the addition of a carboxymethylaminomethyl (cmnm) group at the wobble position (U34) of certain tRNAs, forming tRNA-cmnm(5)s(2)U34. The chain is tRNA modification GTPase MnmE from Rhizobium etli (strain CIAT 652).